We begin with the raw amino-acid sequence, 218 residues long: Guanylate kinase (218 aa).

One can recognise a Guanylate kinase-like domain in the interval 14–193 (GVMLVLSSPS…AFASVRAIVS (180 aa)). Position 21–28 (21–28 (SPSGAGKS)) interacts with ATP.

The protein belongs to the guanylate kinase family.

It localises to the cytoplasm. The enzyme catalyses GMP + ATP = GDP + ADP. Essential for recycling GMP and indirectly, cGMP. The polypeptide is Guanylate kinase (Chelativorans sp. (strain BNC1)).